The sequence spans 534 residues: Cytochrome P450 monooxygenase ascG (534 aa).

Residues 13–33 traverse the membrane as a helical segment; it reads FVASFPALSAAAGLIVAISFI. N466 is a glycosylation site (N-linked (GlcNAc...) asparagine). C469 contributes to the heme binding site.

This sequence belongs to the cytochrome P450 family. Heme is required as a cofactor.

It is found in the membrane. The catalysed reaction is ilicicolin C + NADPH + O2 + H(+) = ascochlorin + NADP(+) + 2 H2O. It functions in the pathway secondary metabolite biosynthesis; terpenoid biosynthesis. Functionally, cytochrome P450 monooxygenase; part of the asc-1 gene cluster that mediates the biosynthesis of both ascochlorin and ascofuranone, a strong inhibitor of cyanide-insensitive alternative oxidases and a promising drug candidate against African trypanosomiasis. The first step in the pathway is performed by the non-reducing polyketide synthase ascC that produces orsellinic acid by condensing acetyl-CoA with 3 malonyl-CoA units. Orsellinic acid is then prenylated by the prenyltransferase ascA to yield ilicicolinic acid B. Ilicicolinic acid B is further reduced to ilicicolin B by the reductase ascB. The halogenase ascD then chlorinates ilicicolin B to produce ilicicolin A which is converted to ilicicolin A epoxide by the cytochrome P450 monooxygenase ascE that catalyzes stereoselective epoxidation of the terminal double bond of the prenyl group. Ilicicolin A epoxide is the last common precursor for the biosynthesis of ascofuranone and ascochlorin. The terpene cyclase ascF produces a monocyclic terpene, and the cyclization reaction is proposed to be initiated by protonation of the terminal epoxide of ilicicolin A epoxide to generate a monocyclic tertiarycation, which is followed by a series of hydride and methyl shifts with abstraction of proton, leading to the formation of the (14S,15R,19R)-trimethylcyclohexanone ring structure of ilicicolin C, which is finally reduced to ascochlorin by the dehydrogenase ascG. On the other hand, ilicicolin A epoxide is hydroxylated by the cytochrome P450 monooxygenase ascH, and the resultant product is cyclized by the terpene cyclase ascI to ascofuranol via protonation-initiated epoxide ring opening, which facilitates the 6-endo-tet cyclization to form the tetrahy-drofuran ring. Finally, ascofuranol is oxidized into ascofuranone by ascJ. This Acremonium egyptiacum (Oospora egyptiaca) protein is Cytochrome P450 monooxygenase ascG.